The chain runs to 326 residues: uncharacterized protein (326 aa).

Solcar repeat units lie at residues 15-106 (EFLV…VRRV), 114-215 (ETHA…ATDF), and 234-322 (LKTW…SKAL). A run of 6 helical transmembrane segments spans residues 16–36 (FLVK…SVVA), 83–103 (TATL…YEQV), 120–140 (FLSG…LELI), 191–211 (FSVT…AYDL), 240–260 (LLCG…FEVC), and 294–314 (FFVG…TSFF).

Belongs to the mitochondrial carrier (TC 2.A.29) family.

It localises to the mitochondrion inner membrane. This is an uncharacterized protein from Schizosaccharomyces pombe (strain 972 / ATCC 24843) (Fission yeast).